The following is a 136-amino-acid chain: Large ribosomal subunit protein uL16 (136 aa).

Belongs to the universal ribosomal protein uL16 family. As to quaternary structure, part of the 50S ribosomal subunit.

Functionally, binds 23S rRNA and is also seen to make contacts with the A and possibly P site tRNAs. The chain is Large ribosomal subunit protein uL16 from Shewanella loihica (strain ATCC BAA-1088 / PV-4).